A 932-amino-acid polypeptide reads, in one-letter code: Chitin synthase regulatory factor 3 (932 aa).

The segment covering M1–L16 has biased composition (basic and acidic residues). Disordered regions lie at residues M1–R53, T264–P356, and E374–V406. Polar residues-rich tracts occupy residues S35 to R53, D274 to S285, and S308 to S319. Residues K337–D349 show a composition bias toward basic and acidic residues. The residue at position 393 (S393) is a Phosphoserine. Sel1-like repeat units lie at residues P638–H674, P675–V710, V711–G747, V751–Y788, A789–Y825, G826–L863, and A864–F899. A disordered region spans residues R905–M932.

The protein is Chitin synthase regulatory factor 3 (chr3) of Schizosaccharomyces pombe (strain 972 / ATCC 24843) (Fission yeast).